We begin with the raw amino-acid sequence, 674 residues long: Endopolyphosphatase (674 aa).

At Met-1–Ser-21 the chain is on the cytoplasmic side. Propeptides (removed in mature form) lie at residues Met-1 to Lys-83 and Glu-385 to Asp-674. Residue Lys-6 forms a Glycyl lysine isopeptide (Lys-Gly) (interchain with G-Cter in ubiquitin) linkage. A helical; Signal-anchor for type II membrane protein transmembrane segment spans residues Leu-22–Phe-42. Over Gln-43–Asp-674 the chain is Vacuolar. Asn-58 is a glycosylation site (N-linked (GlcNAc...) asparagine). Residues Met-384–Thr-403 form a disordered region. Asn-505 and Asn-511 each carry an N-linked (GlcNAc...) asparagine glycan.

It belongs to the endopolyphosphatase PPN1 family. As to quaternary structure, homotetramer. Interacts with PPN2. The cofactor is Mn(2+). Requires Mg(2+) as cofactor. It depends on Co(2+) as a cofactor. Zn(2+) is required as a cofactor. Processing by proteases in the vacuole is required for activation. In terms of processing, ubiquitinated. Ubiquitination mediates sorting into internal vesicles in late endosomes. TUL1 and RSP5 are required for ubiquitination. Other cytoplasmic Lys residues than Lys-6 may also be ubiquitinated. Post-translationally, N-glycosylated. N-glycosylation is essential for the protease-mediated maturation.

It is found in the vacuole membrane. The protein resides in the cytoplasm. The catalysed reaction is [phosphate](n+1) + n H2O = (n+1) phosphate + n H(+). It carries out the reaction [phosphate](n) + H2O = [phosphate](n-1) + phosphate + H(+). It catalyses the reaction dATP + H2O = dADP + phosphate + H(+). Inhibited by heparin and EDTA. Functionally, catalyzes the hydrolysis of inorganic polyphosphate (polyP) chains of many hundreds of phosphate residues into shorter lengths. Has both exopolyphosphatase and endopolyphosphatase activities at different ratios depending on divalent cations by cleaving phosphate from the chain end and by fragmenting long-chain polymers into shorter ones, respectively. The limited digestion products are 1 and 3 P(i) residues. Also releases phosphate from dATP. dATP phosphohydrolase activity is about 7-fold lower than the exopolyphosphatase activity. The protein is Endopolyphosphatase of Saccharomyces cerevisiae (strain ATCC 204508 / S288c) (Baker's yeast).